The following is a 629-amino-acid chain: tRNA uridine 5-carboxymethylaminomethyl modification enzyme MnmG (629 aa).

Position 13 to 18 (13 to 18) interacts with FAD; that stretch reads GGGHAG. 273–287 contributes to the NAD(+) binding site; that stretch reads GPRYCPSIEDKITRF.

The protein belongs to the MnmG family. In terms of assembly, homodimer. Heterotetramer of two MnmE and two MnmG subunits. It depends on FAD as a cofactor.

It is found in the cytoplasm. In terms of biological role, NAD-binding protein involved in the addition of a carboxymethylaminomethyl (cmnm) group at the wobble position (U34) of certain tRNAs, forming tRNA-cmnm(5)s(2)U34. This chain is tRNA uridine 5-carboxymethylaminomethyl modification enzyme MnmG, found in Colwellia psychrerythraea (strain 34H / ATCC BAA-681) (Vibrio psychroerythus).